The sequence spans 290 residues: MKNTFSRLFGFGDKESEFELQDESHEEIDKKVYEEIQEIPIVNITPNRYQPRTVFDDARIDELALTIRTHGLIQPIVVRQYEDDKYEIIAGERRFRAATKLGWEKVPAIIKNLNDTETASVALIENLQREELTAIEEAVAYQKLIELHNLTQEALAQRLGKGQSTIANKLRLLKLPEEIKSALLEKSITERHARALIPLKNEELQLKVLQEIVEKQLNVKQTEERIAKLLEEAKPKRKAKQKAVSRDTRIAMNTIRQSLQMVTESGLNVNSEEEEFDEYYQITIKIPKKK.

Positions 153–172 (EALAQRLGKGQSTIANKLRL) form a DNA-binding region, H-T-H motif.

The protein belongs to the ParB family.

The protein resides in the cytoplasm. Its subcellular location is the nucleoid. Functionally, effects nucleoid occlusion by binding relatively nonspecifically to DNA and preventing the assembly of the division machinery in the vicinity of the nucleoid, especially under conditions that disturb the cell cycle. It helps to coordinate cell division and chromosome segregation by preventing the formation of the Z ring through the nucleoid, which would cause chromosome breakage. In Bacillus cereus (strain G9842), this protein is Nucleoid occlusion protein.